We begin with the raw amino-acid sequence, 219 residues long: Cytidylate kinase (219 aa).

Position 21 to 29 (21 to 29) interacts with ATP; sequence GPAASGKGT.

It belongs to the cytidylate kinase family. Type 1 subfamily.

Its subcellular location is the cytoplasm. The catalysed reaction is CMP + ATP = CDP + ADP. It catalyses the reaction dCMP + ATP = dCDP + ADP. The sequence is that of Cytidylate kinase from Rickettsia africae (strain ESF-5).